Here is a 256-residue protein sequence, read N- to C-terminus: Myb family transcription factor MPH1 (256 aa).

The 61-residue stretch at 14 to 74 (RSEVPRMRWT…HLQMYRSGSS (61 aa)) folds into the HTH myb-type domain. The segment at residues 45–70 (PKRILQLMGVKGVSISHIKSHLQMYR) is a DNA-binding region (H-T-H motif).

In terms of tissue distribution, highly expressed in the pulvinus and stem nodes. Expressed in the plumule of germinating seeds, coleoptile, leaves, internodes, leave sheaths, spikes and roots.

It localises to the nucleus. In terms of biological role, probable transcription factor involved in the regulation of plant height by elongating internode cell length. Involved in the positive regulation of grain yield. May be involved in the regulation of genes related to cell elongation and cell wall synthesis, which are associated with plant height and yield phenotypes. Plays a role in tolerance to cadmium stress. The polypeptide is Myb family transcription factor MPH1 (Oryza sativa subsp. japonica (Rice)).